The primary structure comprises 411 residues: Tyrosine--tRNA ligase (411 aa).

Position 34 (Y34) interacts with L-tyrosine. A 'HIGH' region motif is present at residues 39 to 48 (CTATSLHIGS). Y171 and Q175 together coordinate L-tyrosine. Positions 231 to 235 (KMGKT) match the 'KMSKS' region motif. K234 serves as a coordination point for ATP. Positions 345–411 (ISAYELFHEA…GKKRHILVRV (67 aa)) constitute an S4 RNA-binding domain.

Belongs to the class-I aminoacyl-tRNA synthetase family. TyrS type 1 subfamily. As to quaternary structure, homodimer.

The protein resides in the cytoplasm. It carries out the reaction tRNA(Tyr) + L-tyrosine + ATP = L-tyrosyl-tRNA(Tyr) + AMP + diphosphate + H(+). In terms of biological role, catalyzes the attachment of tyrosine to tRNA(Tyr) in a two-step reaction: tyrosine is first activated by ATP to form Tyr-AMP and then transferred to the acceptor end of tRNA(Tyr). This Rickettsia africae (strain ESF-5) protein is Tyrosine--tRNA ligase.